Consider the following 229-residue polypeptide: Molybdenum transport system permease protein ModB (229 aa).

The Periplasmic segment spans residues 1–16; sequence MILTDPEWQAVLLSLK. The ABC transmembrane type-1 domain maps to 11 to 219; it reads VLLSLKVSSL…MISLLISEWL (209 aa). A helical membrane pass occupies residues 17–37; the sequence is VSSLAVLFSLPFGIFFAWLLV. At 38–49 the chain is on the cytoplasmic side; sequence RCTFPGKALLDS. Residues 50–70 form a helical membrane-spanning segment; the sequence is VLHLPLVLPPVVVGYLLLVSM. Residues 71–83 are Periplasmic-facing; sequence GRRGFIGERLYDW. The chain crosses the membrane as a helical span at residues 84 to 104; it reads FGITFAFSWRGAVLAAAVMSF. Residues 105–136 lie on the Cytoplasmic side of the membrane; it reads PLMVRAIRLALEGVDVKLEQAARTLGAGRWRV. Residues 137-157 form a helical membrane-spanning segment; it reads FFTITLPLTLPGIIVGTVLAF. The Periplasmic segment spans residues 158–201; the sequence is ARSLGEFGATITFVSNIPGETRTIPSAMYTLIQTPGGESGAARL. The helical transmembrane segment at 202–222 threads the bilayer; that stretch reads CIISIALAMISLLISEWLARI. The Cytoplasmic portion of the chain corresponds to 223-229; that stretch reads SRERAGR.

Belongs to the binding-protein-dependent transport system permease family. CysTW subfamily.

Its subcellular location is the cell inner membrane. Part of the binding-protein-dependent transport system for molybdenum; probably responsible for the translocation of the substrate across the membrane. This chain is Molybdenum transport system permease protein ModB (modB), found in Escherichia coli O157:H7.